Consider the following 401-residue polypeptide: Argininosuccinate synthase (401 aa).

ATP is bound at residue 9 to 17 (AYSGGLDTS). L-citrulline is bound at residue Y86. Residue G116 participates in ATP binding. 3 residues coordinate L-aspartate: T118, N122, and D123. Residue N122 coordinates L-citrulline. 5 residues coordinate L-citrulline: R126, S174, S183, E259, and Y271.

It belongs to the argininosuccinate synthase family. Type 1 subfamily. Homotetramer.

Its subcellular location is the cytoplasm. It catalyses the reaction L-citrulline + L-aspartate + ATP = 2-(N(omega)-L-arginino)succinate + AMP + diphosphate + H(+). Its pathway is amino-acid biosynthesis; L-arginine biosynthesis; L-arginine from L-ornithine and carbamoyl phosphate: step 2/3. The protein is Argininosuccinate synthase of Bacillus thuringiensis subsp. konkukian (strain 97-27).